Here is a 325-residue protein sequence, read N- to C-terminus: GTP 3',8-cyclase (325 aa).

Residues 4 to 219 (NYNRNINYLR…HGLQQKFGLL (216 aa)) form the Radical SAM core domain. R13 provides a ligand contact to GTP. The [4Fe-4S] cluster site is built by C20 and C24. Y26 contacts S-adenosyl-L-methionine. Residue C27 participates in [4Fe-4S] cluster binding. A GTP-binding site is contributed by R63. G67 serves as a coordination point for S-adenosyl-L-methionine. T94 contributes to the GTP binding site. S118 is a binding site for S-adenosyl-L-methionine. Residue K155 participates in GTP binding. M189 lines the S-adenosyl-L-methionine pocket. [4Fe-4S] cluster-binding residues include C254 and C257. 259–261 (RLR) serves as a coordination point for GTP. C271 is a binding site for [4Fe-4S] cluster.

The protein belongs to the radical SAM superfamily. MoaA family. As to quaternary structure, monomer and homodimer. [4Fe-4S] cluster is required as a cofactor.

It carries out the reaction GTP + AH2 + S-adenosyl-L-methionine = (8S)-3',8-cyclo-7,8-dihydroguanosine 5'-triphosphate + 5'-deoxyadenosine + L-methionine + A + H(+). It participates in cofactor biosynthesis; molybdopterin biosynthesis. In terms of biological role, catalyzes the cyclization of GTP to (8S)-3',8-cyclo-7,8-dihydroguanosine 5'-triphosphate. In Desulforamulus reducens (strain ATCC BAA-1160 / DSM 100696 / MI-1) (Desulfotomaculum reducens), this protein is GTP 3',8-cyclase.